Reading from the N-terminus, the 2628-residue chain is Protein FMP27, mitochondrial (2628 aa).

Residues 1–28 (MMFPINVLLYKWLIFAVTFLWSCKILLR) form the signal peptide. The segment at 29-192 (KLLGINITWI…NTNLLIGEIM (164 aa)) is transmembrane domain. LRR repeat units follow at residues 160–182 (FDSF…IFIV), 213–236 (PMNL…KLLQ), 271–296 (IKPL…NHPE), 306–333 (YNVL…IFEE), 571–596 (NADI…LVHN), 835–857 (VVSL…IFGH), 1944–1967 (FDSL…FFIF), 2101–2125 (FFML…IFLK), and 2303–2327 (IGKL…ILRK).

It localises to the cell membrane. The protein resides in the endoplasmic reticulum membrane. The protein localises to the mitochondrion membrane. In terms of biological role, tube-forming lipid transport protein which binds to phosphatidylinositols and affects phosphatidylinositol-4,5-bisphosphate (PtdIns-4,5-P2) distribution. This Saccharomyces cerevisiae (strain ATCC 204508 / S288c) (Baker's yeast) protein is Protein FMP27, mitochondrial.